Reading from the N-terminus, the 21-residue chain is Venom peptide Tv1 (21 aa).

Cystine bridges form between Cys-4/Cys-20, Cys-5/Cys-21, and Cys-7/Cys-16.

As to expression, expressed by the salivary gland. This peptide is considered as a venom peptide.

The protein localises to the secreted. Injections of 20 uM of this synthetic peptide (Ile) causes partial paralysis to polychaete worms (Nereis virens), the natural prey of terebrid snails. This paralysis may be due to an inhibition of nicotinic receptors at the neuromuscular junction. This Terebra variegata (Variegate auger snail) protein is Venom peptide Tv1.